A 403-amino-acid chain; its full sequence is S-adenosylmethionine synthase (403 aa).

140–145 is an ATP binding site; the sequence is GKGSTD.

This sequence belongs to the AdoMet synthase 2 family. It depends on Mg(2+) as a cofactor.

The enzyme catalyses L-methionine + ATP + H2O = S-adenosyl-L-methionine + phosphate + diphosphate. It functions in the pathway amino-acid biosynthesis; S-adenosyl-L-methionine biosynthesis; S-adenosyl-L-methionine from L-methionine: step 1/1. Functionally, catalyzes the formation of S-adenosylmethionine from methionine and ATP. This is S-adenosylmethionine synthase from Sulfolobus acidocaldarius (strain ATCC 33909 / DSM 639 / JCM 8929 / NBRC 15157 / NCIMB 11770).